Here is a 310-residue protein sequence, read N- to C-terminus: Glycerol-3-phosphate dehydrogenase [NAD(P)+] (310 aa).

NADPH contacts are provided by Trp-14, Arg-34, Arg-35, and Lys-82. Lys-82 and Gly-110 together coordinate sn-glycerol 3-phosphate. Ser-114 contributes to the NADPH binding site. The sn-glycerol 3-phosphate site is built by Lys-165, Asp-218, Ser-228, Arg-229, and Asn-230. Lys-165 (proton acceptor) is an active-site residue. Arg-229 is a binding site for NADPH. Glu-255 is a binding site for NADPH.

This sequence belongs to the NAD-dependent glycerol-3-phosphate dehydrogenase family.

It is found in the cytoplasm. It carries out the reaction sn-glycerol 3-phosphate + NAD(+) = dihydroxyacetone phosphate + NADH + H(+). It catalyses the reaction sn-glycerol 3-phosphate + NADP(+) = dihydroxyacetone phosphate + NADPH + H(+). It functions in the pathway membrane lipid metabolism; glycerophospholipid metabolism. Its function is as follows. Catalyzes the reduction of the glycolytic intermediate dihydroxyacetone phosphate (DHAP) to sn-glycerol 3-phosphate (G3P), the key precursor for phospholipid synthesis. This chain is Glycerol-3-phosphate dehydrogenase [NAD(P)+], found in Acaryochloris marina (strain MBIC 11017).